Here is a 263-residue protein sequence, read N- to C-terminus: Pheophorbidase (263 aa).

An AB hydrolase-1 domain is found at 13–244 (HFVFVHGASH…LEESDHSAFF (232 aa)). Serine 88 acts as the Acyl-ester intermediate in catalysis. Catalysis depends on charge relay system residues aspartate 212 and histidine 240.

It belongs to the AB hydrolase superfamily. Homodimer.

Its subcellular location is the cytoplasm. It catalyses the reaction pheophorbide a + H2O + H(+) = pyropheophorbide a + methanol + CO2. Its activity is regulated as follows. Inhibited by methanol and phenylmethylsulfonicfluoride (PMSF). Its function is as follows. Involved in chlorophyll degradation. Specific for the pheophorbides of the dihydroporphyrin and tetrahydroporphyrin types. Chlorophyllide a, pheophytin a and the nonfluorescent chlorophyll catabolite (NCC) are not used as substrates. This chain is Pheophorbidase (PPD), found in Raphanus sativus (Radish).